A 151-amino-acid chain; its full sequence is Cytochrome c oxidase subunit 5B, mitochondrial (151 aa).

A mitochondrion-targeting transit peptide spans 1-17 (MLRTSLTKGARLTGTRF). Over 18–85 (VQTKALSKAT…EWGPRRPVHG (68 aa)) the chain is Mitochondrial matrix. The chain crosses the membrane as a helical span at residues 86–108 (KGDVAFITKGVFLGLGISFGLFG). Residues 109-151 (LVRLLANPETPKTMNREWQLKSDEYLKSKNANPWGGYSQVQSK) are Mitochondrial intermembrane-facing.

Belongs to the cytochrome c oxidase IV family. Component of the cytochrome c oxidase (complex IV, CIV), a multisubunit enzyme composed of 12 subunits. The complex is composed of a catalytic core of 3 subunits COX1, COX2 and COX3, encoded in the mitochondrial DNA, and 9 supernumerary subunits COX4, COX5A (or COX5B), COX6, COX7, COX8, COX9, COX12, COX13 and COX26, which are encoded in the nuclear genome. COX5A is the predominant subunit V during aerobic/normoxic growth, it gets replaced by COX5B under anaerobic/hypoxic conditions. The complex exists as a monomer or a dimer and forms supercomplexes (SCs) in the inner mitochondrial membrane with a dimer of ubiquinol-cytochrome c oxidoreductase (cytochrome b-c1 complex, complex III, CIII), resulting in 2 different assemblies (supercomplexes III(2)IV and III(2)IV(2)).

It is found in the mitochondrion inner membrane. Its pathway is energy metabolism; oxidative phosphorylation. In terms of biological role, component of the cytochrome c oxidase, the last enzyme in the mitochondrial electron transport chain which drives oxidative phosphorylation. The respiratory chain contains 3 multisubunit complexes succinate dehydrogenase (complex II, CII), ubiquinol-cytochrome c oxidoreductase (cytochrome b-c1 complex, complex III, CIII) and cytochrome c oxidase (complex IV, CIV), that cooperate to transfer electrons derived from NADH and succinate to molecular oxygen, creating an electrochemical gradient over the inner membrane that drives transmembrane transport and the ATP synthase. Cytochrome c oxidase is the component of the respiratory chain that catalyzes the reduction of oxygen to water. Electrons originating from reduced cytochrome c in the intermembrane space (IMS) are transferred via the dinuclear copper A center (CU(A)) of COX2 and heme A of COX1 to the active site in COX1, a binuclear center (BNC) formed by heme A3 and copper B (CU(B)). The BNC reduces molecular oxygen to 2 water molecules using 4 electrons from cytochrome c in the IMS and 4 protons from the mitochondrial matrix. This chain is Cytochrome c oxidase subunit 5B, mitochondrial (COX5B), found in Saccharomyces cerevisiae (strain ATCC 204508 / S288c) (Baker's yeast).